Reading from the N-terminus, the 162-residue chain is MADSSFDVVSKVDRMEADNAVHQTQKEVEQRYDFKNVGASIEWSGDTILMKASSEERVKAILDVLQTKMIKRGIGLKSLEEGEPFASGKEYRIEVTLKQGIDQANAKKIGKIIRDEGPKGIKSRVEGDELRVSSKSRDDLQQTIALLKGADVDLDLQFVNFR.

It belongs to the YajQ family.

Functionally, nucleotide-binding protein. In Clavibacter michiganensis subsp. michiganensis (strain NCPPB 382), this protein is Nucleotide-binding protein CMM_2802.